A 509-amino-acid polypeptide reads, in one-letter code: Bifunctional purine biosynthesis protein PurH (509 aa).

The MGS-like domain occupies 1–144 (MKRALISVSD…KNYAAVTVVV (144 aa)).

It belongs to the PurH family.

The catalysed reaction is (6R)-10-formyltetrahydrofolate + 5-amino-1-(5-phospho-beta-D-ribosyl)imidazole-4-carboxamide = 5-formamido-1-(5-phospho-D-ribosyl)imidazole-4-carboxamide + (6S)-5,6,7,8-tetrahydrofolate. It carries out the reaction IMP + H2O = 5-formamido-1-(5-phospho-D-ribosyl)imidazole-4-carboxamide. The protein operates within purine metabolism; IMP biosynthesis via de novo pathway; 5-formamido-1-(5-phospho-D-ribosyl)imidazole-4-carboxamide from 5-amino-1-(5-phospho-D-ribosyl)imidazole-4-carboxamide (10-formyl THF route): step 1/1. It functions in the pathway purine metabolism; IMP biosynthesis via de novo pathway; IMP from 5-formamido-1-(5-phospho-D-ribosyl)imidazole-4-carboxamide: step 1/1. In Listeria welshimeri serovar 6b (strain ATCC 35897 / DSM 20650 / CCUG 15529 / CIP 8149 / NCTC 11857 / SLCC 5334 / V8), this protein is Bifunctional purine biosynthesis protein PurH.